We begin with the raw amino-acid sequence, 215 residues long: UPF0502 protein YceH (215 aa).

This sequence belongs to the UPF0502 family.

This chain is UPF0502 protein YceH, found in Salmonella schwarzengrund (strain CVM19633).